A 1215-amino-acid polypeptide reads, in one-letter code: Inner capsid protein VP3 (1215 aa).

The tract at residues 1–81 (MPRRPRRNAK…RVDNDGDVIT (81 aa)) is disordered. Residues 21 to 44 (LVAPAANASVSSTVNTTTSPTLAA) show a composition bias toward low complexity. The C2H2-type zinc finger occupies 118–141 (YRCNVCNAEFPSMSAMTEHLRTSH).

It belongs to the turreted BTV-fold inner capsid family. Homodecamer; each decamer is made up of two conformers of VP2, called VP2A and VP2B. 12 homodecamers assemble to form an icosahedral capsid. Interacts with VP6.

It localises to the virion. Inner capsid protein that self-assembles to form an icosahedral capsid with a T=2 symmetry, which consists of 120 copies of VP2, with channels at each of its five-fold vertices. This capsid constitutes the innermost concentric layer of the viral mature particle. The protein is Inner capsid protein VP3 (S3) of Ctenopharyngodon idella (Grass carp).